The sequence spans 407 residues: Accessory Sec system protein translocase subunit SecY2 (407 aa).

The next 10 helical transmembrane spans lie at 22–42 (IAFT…TIVD), 68–88 (LNVF…ISLI), 108–128 (EKFL…NQFV), 136–156 (FTEL…MWLA), 169–189 (PIVL…IVSI), 191–211 (ILML…LLLT), 245–265 (ISIM…NLIF), 280–300 (FGHY…GYLL), 343–363 (WFGT…SLLV), and 366–386 (LSEY…AMNI).

Belongs to the SecY/SEC61-alpha family. SecY2 subfamily. Component of the accessory SecA2/SecY2 protein translocase complex required to export cell wall proteins. May form heterotrimers with SecE and SecG subunits.

It localises to the cell membrane. In terms of biological role, part of the accessory SecA2/SecY2 system specifically required for export of possible cell wall proteins. The central subunit of a protein translocation channel. The chain is Accessory Sec system protein translocase subunit SecY2 from Staphylococcus pseudintermedius (strain ED99).